A 201-amino-acid polypeptide reads, in one-letter code: Large ribosomal subunit protein uL4 (201 aa).

A disordered region spans residues 43 to 69; sequence TKAQKGRSDVSGGGAKPWKQKGSGRAR.

Belongs to the universal ribosomal protein uL4 family. In terms of assembly, part of the 50S ribosomal subunit.

One of the primary rRNA binding proteins, this protein initially binds near the 5'-end of the 23S rRNA. It is important during the early stages of 50S assembly. It makes multiple contacts with different domains of the 23S rRNA in the assembled 50S subunit and ribosome. In terms of biological role, forms part of the polypeptide exit tunnel. This is Large ribosomal subunit protein uL4 from Thioalkalivibrio sulfidiphilus (strain HL-EbGR7).